The primary structure comprises 103 residues: c-Myc-binding protein (103 aa).

Belongs to the AMY1 family. As to quaternary structure, binds via its C-terminal region to the N-terminal region of MYC. Associates with AKAP1/S-AKAP84. Interacts with MYCBPAP. Interacts with CFAP91.

The protein resides in the cytoplasm. Its subcellular location is the nucleus. In terms of biological role, may control the transcriptional activity of MYC. Stimulates the activation of E box-dependent transcription by MYC. This is c-Myc-binding protein (MYCBP) from Pongo abelii (Sumatran orangutan).